A 657-amino-acid polypeptide reads, in one-letter code: Matrix metalloproteinase-15 (657 aa).

Residues 1–36 form the signal peptide; it reads MGSDRSALGRPGCTGSCLSSRASLLPLLLVLLDCLG. Positions 37-127 are excised as a propeptide; that stretch reads HGTASKDAEV…KANLRRRRKR (91 aa). The short motif at 105-112 is the Cysteine switch element; the sequence is PRCGVPDQ. Zn(2+) is bound at residue C107. The Extracellular segment spans residues 128–614; sequence YTLTGKAWNN…MEEVVRTVNV (487 aa). An N-linked (GlcNAc...) asparagine glycan is attached at N146. A Zn(2+)-binding site is contributed by H255. Residue E256 is part of the active site. Zn(2+) contacts are provided by H259 and H265. Residues 295–365 form a disordered region; the sequence is IQQLYGSPDG…ERPDQYGPNI (71 aa). Positions 328 to 337 are enriched in pro residues; that stretch reads PRPPQPPHPG. Hemopexin repeat units follow at residues 363-411, 412-457, 459-507, and 508-555; these read PNIC…WRGL, PGNI…GTDI, YDRI…QGIP, and TSPK…FMGC. A disulfide bridge connects residues C366 and C555. An N-linked (GlcNAc...) asparagine glycan is attached at N414. The tract at residues 561 to 599 is disordered; it reads PRSRWPDVARPPFNPNGGAEPEADGDSKEENAGDKDEGS. Residues 585-599 show a composition bias toward basic and acidic residues; that stretch reads GDSKEENAGDKDEGS. A helical membrane pass occupies residues 615-635; that stretch reads VMVLVPLLLLLCILGLAFALV. Topologically, residues 636–657 are cytoplasmic; sequence QMQRKGAPRMLLYCKRSLQEWV.

The protein belongs to the peptidase M10A family. It depends on Zn(2+) as a cofactor. Requires Ca(2+) as cofactor. In terms of processing, the precursor is cleaved by a furin endopeptidase.

It is found in the membrane. In terms of biological role, endopeptidase that degrades various components of the extracellular matrix. May activate progelatinase A. The chain is Matrix metalloproteinase-15 (Mmp15) from Mus musculus (Mouse).